A 253-amino-acid chain; its full sequence is Imidazole glycerol phosphate synthase subunit HisF (253 aa).

Residues D11 and D130 contribute to the active site.

Belongs to the HisA/HisF family. As to quaternary structure, heterodimer of HisH and HisF.

It localises to the cytoplasm. It catalyses the reaction 5-[(5-phospho-1-deoxy-D-ribulos-1-ylimino)methylamino]-1-(5-phospho-beta-D-ribosyl)imidazole-4-carboxamide + L-glutamine = D-erythro-1-(imidazol-4-yl)glycerol 3-phosphate + 5-amino-1-(5-phospho-beta-D-ribosyl)imidazole-4-carboxamide + L-glutamate + H(+). The protein operates within amino-acid biosynthesis; L-histidine biosynthesis; L-histidine from 5-phospho-alpha-D-ribose 1-diphosphate: step 5/9. Functionally, IGPS catalyzes the conversion of PRFAR and glutamine to IGP, AICAR and glutamate. The HisF subunit catalyzes the cyclization activity that produces IGP and AICAR from PRFAR using the ammonia provided by the HisH subunit. The protein is Imidazole glycerol phosphate synthase subunit HisF of Clostridium botulinum (strain Okra / Type B1).